The primary structure comprises 103 residues: Large ribosomal subunit protein bL21 (103 aa).

The protein belongs to the bacterial ribosomal protein bL21 family. Part of the 50S ribosomal subunit. Contacts protein L20.

This protein binds to 23S rRNA in the presence of protein L20. The chain is Large ribosomal subunit protein bL21 from Enterobacter sp. (strain 638).